A 332-amino-acid chain; its full sequence is Holliday junction branch migration complex subunit RuvB (332 aa).

The tract at residues 1 to 182 (MKLNKNSELK…FGLILKLNYY (182 aa)) is large ATPase domain (RuvB-L). Residues L21, R22, G63, K66, T67, T68, 129 to 131 (EDY), R172, Y182, and R219 each bind ATP. Residue T67 participates in Mg(2+) binding. The segment at 183–253 (SEDELELIIK…ISEIALEKLT (71 aa)) is small ATPAse domain (RuvB-S). Residues 256–332 (KNGLDDADYT…FKLFKNDKIK (77 aa)) are head domain (RuvB-H). Positions 311 and 316 each coordinate DNA.

The protein belongs to the RuvB family. As to quaternary structure, homohexamer. Forms an RuvA(8)-RuvB(12)-Holliday junction (HJ) complex. HJ DNA is sandwiched between 2 RuvA tetramers; dsDNA enters through RuvA and exits via RuvB. An RuvB hexamer assembles on each DNA strand where it exits the tetramer. Each RuvB hexamer is contacted by two RuvA subunits (via domain III) on 2 adjacent RuvB subunits; this complex drives branch migration. In the full resolvosome a probable DNA-RuvA(4)-RuvB(12)-RuvC(2) complex forms which resolves the HJ.

It is found in the cytoplasm. It catalyses the reaction ATP + H2O = ADP + phosphate + H(+). In terms of biological role, the RuvA-RuvB-RuvC complex processes Holliday junction (HJ) DNA during genetic recombination and DNA repair, while the RuvA-RuvB complex plays an important role in the rescue of blocked DNA replication forks via replication fork reversal (RFR). RuvA specifically binds to HJ cruciform DNA, conferring on it an open structure. The RuvB hexamer acts as an ATP-dependent pump, pulling dsDNA into and through the RuvAB complex. RuvB forms 2 homohexamers on either side of HJ DNA bound by 1 or 2 RuvA tetramers; 4 subunits per hexamer contact DNA at a time. Coordinated motions by a converter formed by DNA-disengaged RuvB subunits stimulates ATP hydrolysis and nucleotide exchange. Immobilization of the converter enables RuvB to convert the ATP-contained energy into a lever motion, pulling 2 nucleotides of DNA out of the RuvA tetramer per ATP hydrolyzed, thus driving DNA branch migration. The RuvB motors rotate together with the DNA substrate, which together with the progressing nucleotide cycle form the mechanistic basis for DNA recombination by continuous HJ branch migration. Branch migration allows RuvC to scan DNA until it finds its consensus sequence, where it cleaves and resolves cruciform DNA. This Phytoplasma mali (strain AT) protein is Holliday junction branch migration complex subunit RuvB.